Here is a 569-residue protein sequence, read N- to C-terminus: uncharacterized protein (569 aa).

A signal peptide spans 1–21; it reads MLCVMMLLFSAIASFPVSAQA. At 22-530 the chain is on the extracellular side; the sequence is KDQDAGILII…DHHRQTPLEK (509 aa). A helical transmembrane segment spans residues 531–551; that stretch reads ALWILSAVVLLFVIMFVSYTF. At 552 to 569 the chain is on the cytoplasmic side; it reads YLRATLKKRIFKERRSLG.

It localises to the cell membrane. This is an uncharacterized protein from Bacillus subtilis (strain 168).